The chain runs to 900 residues: Phosphoenolpyruvate carboxylase (900 aa).

Residues H140 and K568 contribute to the active site.

The protein belongs to the PEPCase type 1 family. Mg(2+) serves as cofactor.

It catalyses the reaction oxaloacetate + phosphate = phosphoenolpyruvate + hydrogencarbonate. Forms oxaloacetate, a four-carbon dicarboxylic acid source for the tricarboxylic acid cycle. The chain is Phosphoenolpyruvate carboxylase from Neisseria meningitidis serogroup A / serotype 4A (strain DSM 15465 / Z2491).